The sequence spans 93 residues: UPF0473 protein BH1270 (93 aa).

Belongs to the UPF0473 family.

This is UPF0473 protein BH1270 from Halalkalibacterium halodurans (strain ATCC BAA-125 / DSM 18197 / FERM 7344 / JCM 9153 / C-125) (Bacillus halodurans).